The chain runs to 445 residues: KIN17-like protein (445 aa).

A C2H2-type zinc finger spans residues 26–50 (WYCQLCEKQCRDENGFKCHISSESH). Composition is skewed to low complexity over residues 215 to 229 (NTTT…TTTN) and 239 to 253 (NDNN…DQTN). Positions 215-256 (NTTTTTTNTTTTTTNKNIFDKLKTNDNNSSNNNYNDQTNPKP) are disordered.

It belongs to the KIN17 family.

This chain is KIN17-like protein, found in Dictyostelium discoideum (Social amoeba).